The sequence spans 368 residues: 3-dehydroquinate synthase (368 aa).

Residues 112–116 (GVVGD), 136–137 (TT), lysine 149, lysine 158, and 176–179 (FLDT) contribute to the NAD(+) site. Residues glutamate 191, histidine 257, and histidine 274 each contribute to the Zn(2+) site.

The protein belongs to the sugar phosphate cyclases superfamily. Dehydroquinate synthase family. It depends on Co(2+) as a cofactor. Zn(2+) serves as cofactor. The cofactor is NAD(+).

Its subcellular location is the cytoplasm. The catalysed reaction is 7-phospho-2-dehydro-3-deoxy-D-arabino-heptonate = 3-dehydroquinate + phosphate. The protein operates within metabolic intermediate biosynthesis; chorismate biosynthesis; chorismate from D-erythrose 4-phosphate and phosphoenolpyruvate: step 2/7. Its function is as follows. Catalyzes the conversion of 3-deoxy-D-arabino-heptulosonate 7-phosphate (DAHP) to dehydroquinate (DHQ). The polypeptide is 3-dehydroquinate synthase (Natranaerobius thermophilus (strain ATCC BAA-1301 / DSM 18059 / JW/NM-WN-LF)).